The sequence spans 291 residues: Filament protein FIN1 (291 aa).

S54 bears the Phosphoserine mark. Phosphothreonine is present on T68. S74 and S88 each carry phosphoserine. Positions 254 to 284 form a coiled coil; that stretch reads VELKEIKDLLLQMLRRQREIESRLSNIELQL.

In terms of assembly, homooligomer; in vitro, FIN1 self-assembles into 10 nm diameter filaments. Interacts with the 14-3-3 proteins BMH1 and BMH2, and the protein phosphatase 1 complex catalytic subunit GLC7. Post-translationally, phosphorylated by CDC28. Phosphorylation is required for BMH1 and BMH2 interaction. Dephosphorylation by GLC7 depends on the presence of BMH1 and BMH2.

The protein localises to the nucleus. It is found in the cytoplasm. The protein resides in the cytoskeleton. Its subcellular location is the spindle pole. In terms of biological role, forms cell-cycle specific filaments between the spindle pole bodies of dividing yeast cells. In Saccharomyces cerevisiae (strain ATCC 204508 / S288c) (Baker's yeast), this protein is Filament protein FIN1 (FIN1).